The sequence spans 187 residues: Large ribosomal subunit protein uL5 (187 aa).

The protein belongs to the universal ribosomal protein uL5 family. As to quaternary structure, part of the 50S ribosomal subunit; part of the 5S rRNA/L5/L18/L25 subcomplex. Contacts the 5S rRNA and the P site tRNA. Forms a bridge to the 30S subunit in the 70S ribosome.

This is one of the proteins that bind and probably mediate the attachment of the 5S RNA into the large ribosomal subunit, where it forms part of the central protuberance. In the 70S ribosome it contacts protein S13 of the 30S subunit (bridge B1b), connecting the 2 subunits; this bridge is implicated in subunit movement. Contacts the P site tRNA; the 5S rRNA and some of its associated proteins might help stabilize positioning of ribosome-bound tRNAs. The sequence is that of Large ribosomal subunit protein uL5 from Mycobacterium bovis (strain BCG / Tokyo 172 / ATCC 35737 / TMC 1019).